The chain runs to 214 residues: Glycerol-3-phosphate acyltransferase (214 aa).

5 helical membrane-spanning segments follow: residues 8–28, 70–90, 111–131, 144–164, and 165–185; these read LILA…QIFF, LLPL…LIAV, AGVV…IFIV, IVVA…GIIL, and PSYD…ILIR.

This sequence belongs to the PlsY family. In terms of assembly, probably interacts with PlsX.

Its subcellular location is the cell membrane. The catalysed reaction is an acyl phosphate + sn-glycerol 3-phosphate = a 1-acyl-sn-glycero-3-phosphate + phosphate. The protein operates within lipid metabolism; phospholipid metabolism. Catalyzes the transfer of an acyl group from acyl-phosphate (acyl-PO(4)) to glycerol-3-phosphate (G3P) to form lysophosphatidic acid (LPA). This enzyme utilizes acyl-phosphate as fatty acyl donor, but not acyl-CoA or acyl-ACP. The polypeptide is Glycerol-3-phosphate acyltransferase (Streptococcus gordonii (strain Challis / ATCC 35105 / BCRC 15272 / CH1 / DL1 / V288)).